The primary structure comprises 86 residues: Small ribosomal subunit protein bS20 (86 aa).

Residues 1-27 (MANSKSAKKRATQAERRRQHNASRRSM) show a composition bias toward basic residues. Residues 1 to 28 (MANSKSAKKRATQAERRRQHNASRRSMM) form a disordered region.

It belongs to the bacterial ribosomal protein bS20 family.

Functionally, binds directly to 16S ribosomal RNA. The protein is Small ribosomal subunit protein bS20 of Aliivibrio fischeri (strain MJ11) (Vibrio fischeri).